The primary structure comprises 353 residues: Guanine nucleotide-binding protein subunit beta-5 (353 aa).

WD repeat units lie at residues 61 to 100, 103 to 142, 151 to 192, 194 to 236, 237 to 276, 278 to 320, and 323 to 352; these read GHGN…KEHA, MPCT…NENM, MHTN…QSFH, HGAD…QAFE, THES…EVAI, SKES…RVSI, and GHEN…LRVW.

It belongs to the WD repeat G protein beta family. Component of a complex composed of RGS9 (isoform RGS9-1), GNB5 and RGS9BP; within this complex, the presence of GNB5 stabilizes both itself and RGS9 and increases RGS9 GTPase-activating protein (GAP) activity. Interacts with RGS7, forming the RGS7-GNB5 complex; within this complex, the presence of GNB5 increases RGS7 GTPase-activating protein (GAP) activity. Interacts with GPR158; promotes the GTPase activator activity of the RGS7-GNB5 complex in absence of glycine, in contrast GTPase activator activity of the RGS7-GNB5 complex is inhibited in presence of glycine. Interacts with RGS6. Detected in brain.

It is found in the membrane. In terms of biological role, enhances GTPase-activating protein (GAP) activity of regulator of G protein signaling (RGS) proteins, such as RGS7 and RGS9, hence involved in the termination of the signaling initiated by the G protein coupled receptors (GPCRs) by accelerating the GTP hydrolysis on the G-alpha subunits, thereby promoting their inactivation. Increases RGS7 GTPase-activating protein (GAP) activity, thereby regulating mood and cognition. Increases RGS9 GTPase-activating protein (GAP) activity, hence contributes to the deactivation of G protein signaling initiated by D(2) dopamine receptors. May play an important role in neuronal signaling, including in the parasympathetic, but not sympathetic, control of heart rate. This Rattus norvegicus (Rat) protein is Guanine nucleotide-binding protein subunit beta-5 (Gnb5).